The chain runs to 314 residues: MSWSPAFLRSEDVERYLGSSSILLPALEKALANFSSGSEGGVVQPVRTVIPVAKHQGFLGIMPVYSASEDALTTKLVTFYEGMSPTSTAPSHQTTVLFFDPSNGSLLSIMDGNIITAKRTAAVSAIATKFLKPPSSEVLCILGAGVQAYSHYEIFKEQFSFKEVRIWNRTKKNAEKFAQTVKGDVRVCSSVQEAVTGADVIITVTMATKPILFGEWVKPGAHINAVGASRPDWRELDDEIMKNCVLYVDSREAALKESGDVILSGAEIFAELGEVVKGVKPAHREKTTVFKSLGMAVEDAVAAKLVYDSWSSGK.

Position 47 (Arg-47) interacts with 3,3',5-triiodo-L-thyronine. The NADPH site is built by Ser-91, His-92, Arg-119, Ala-144, Val-146, Gln-147, Asn-168, Arg-169, Thr-170, Asn-173, Thr-205, Met-206, and Val-226. Glu-257 lines the 3,3',5-triiodo-L-thyronine pocket. Ser-292 lines the NADPH pocket.

Belongs to the ornithine cyclodeaminase/mu-crystallin family. As to quaternary structure, homodimer. Binds the thyroid hormone triiodothyronine (T3); T3 binding inhibits enzymatic activity. As to expression, expressed at high abundance in lens, but outside the lens it is preferentially expressed in neural tissues, retina and brain.

The protein resides in the cytoplasm. The catalysed reaction is L-pipecolate + NADP(+) = Delta(1)-piperideine-2-carboxylate + NADPH + H(+). It catalyses the reaction L-pipecolate + NAD(+) = Delta(1)-piperideine-2-carboxylate + NADH + H(+). The enzyme catalyses L-proline + NADP(+) = 1-pyrroline-2-carboxylate + NADPH + H(+). It carries out the reaction L-proline + NAD(+) = 1-pyrroline-2-carboxylate + NADH + H(+). The catalysed reaction is (3R)-1,4-thiomorpholine-3-carboxylate + NAD(+) = 3,4-dehydrothiomorpholine-3-carboxylate + NADH + 2 H(+). It catalyses the reaction (3R)-1,4-thiomorpholine-3-carboxylate + NADP(+) = 3,4-dehydrothiomorpholine-3-carboxylate + NADPH + 2 H(+). The enzyme catalyses (S)-cystathionine ketimine + NADH + 2 H(+) = (3R,5S)-2,3,5,6,7-pentahydro-1,4-thiazepine-3,5-dicarboxylate + NAD(+). It carries out the reaction (S)-cystathionine ketimine + NADPH + 2 H(+) = (3R,5S)-2,3,5,6,7-pentahydro-1,4-thiazepine-3,5-dicarboxylate + NADP(+). The catalysed reaction is (R)-lanthionine ketimine + NADPH + 2 H(+) = (3R,5R)-1,4-thiomorpholine-3,5-dicarboxylate + NADP(+). It catalyses the reaction Delta(2)-thiazoline-2-carboxylate + NADPH + 2 H(+) = L-thiazolidine-2-carboxylate + NADP(+). Functionally, catalyzes the NAD(P)H-dependent reduction of imine double bonds of a number of cyclic ketimine substrates, including sulfur-containing cyclic ketimines. Under physiological conditions, it efficiently catalyzes delta(1)-piperideine-2-carboxylate (P2C) and delta(1)-pyrroline-2-carboxylate (Pyr2C) reduction, suggesting a central role in lysine and glutamate metabolism. Additional substrates are delta(2)-thiazoline-2-carboxylate (T2C), 3,4-dehydrothiomorpholine-3-carboxylate (AECK), and (R)-lanthionine ketimine (LK) that is reduced at very low rate compared to other substrates. Also catalyzes the NAD(P)H-dependent reduction of (S)-cystathionine ketimine (CysK). This chain is Ketimine reductase mu-crystallin (CRYM), found in Macropus fuliginosus (Western gray kangaroo).